A 326-amino-acid polypeptide reads, in one-letter code: tRNA-modifying protein YgfZ (326 aa).

Positions 27 and 189 each coordinate folate.

This sequence belongs to the tRNA-modifying YgfZ family.

The protein localises to the cytoplasm. Its function is as follows. Folate-binding protein involved in regulating the level of ATP-DnaA and in the modification of some tRNAs. It is probably a key factor in regulatory networks that act via tRNA modification, such as initiation of chromosomal replication. In Enterobacter sp. (strain 638), this protein is tRNA-modifying protein YgfZ.